The sequence spans 554 residues: 4-coumarate--CoA ligase 3 (554 aa).

6 residues coordinate ATP: serine 188, serine 189, glycine 190, threonine 191, threonine 192, and lysine 196. (E)-4-coumaroyl-AMP contacts are provided by tyrosine 238 and serine 242. Lysine 259 provides a ligand contact to CoA. Residues 261-330 (DLGALVDLVR…AKIPNAVLGQ (70 aa)) form an SBD1 region. Positions 308, 330, 331, 335, and 343 each coordinate (E)-4-coumaroyl-AMP. 3 residues coordinate ATP: glutamine 330, glycine 331, and threonine 335. Residues 331–398 (GYGMTEAGPV…IRGEQIMKGY (68 aa)) form an SBD2 region. 2 residues coordinate ATP: aspartate 419 and arginine 434. (E)-4-coumaroyl-AMP contacts are provided by lysine 436 and lysine 440. CoA-binding residues include lysine 442 and glycine 443. Lysine 525 serves as a coordination point for ATP.

Belongs to the ATP-dependent AMP-binding enzyme family. Mg(2+) serves as cofactor. As to expression, expressed in root exodermis and epidermis cells, stem vascular cells, leaf developing vascular bundle cells and parenchyma cells, lemma, palea, stamens and pistil.

It carries out the reaction (E)-ferulate + ATP + CoA = (E)-feruloyl-CoA + AMP + diphosphate. The enzyme catalyses (E)-4-coumarate + ATP + CoA = (E)-4-coumaroyl-CoA + AMP + diphosphate. It catalyses the reaction (E)-caffeate + ATP + CoA = (E)-caffeoyl-CoA + AMP + diphosphate. The catalysed reaction is (E)-cinnamate + ATP + CoA = (E)-cinnamoyl-CoA + AMP + diphosphate. It carries out the reaction (E)-ferulate + ATP + H(+) = (E)-feruloyl-AMP + diphosphate. The enzyme catalyses (E)-feruloyl-AMP + CoA = (E)-feruloyl-CoA + AMP + H(+). It catalyses the reaction (E)-4-coumarate + ATP + H(+) = (E)-4-coumaroyl-AMP + diphosphate. The catalysed reaction is (E)-4-coumaroyl-AMP + CoA = (E)-4-coumaroyl-CoA + AMP + H(+). It carries out the reaction (E)-caffeate + ATP + H(+) = (E)-caffeoyl-AMP + diphosphate. The enzyme catalyses (E)-caffeoyl-AMP + CoA = (E)-caffeoyl-CoA + AMP + H(+). The protein operates within phytoalexin biosynthesis; 3,4',5-trihydroxystilbene biosynthesis; 3,4',5-trihydroxystilbene from trans-4-coumarate: step 1/2. Functionally, involved in the phenylpropanoid metabolism by mediating the activation of a number of hydroxycinnamates for the biosynthesis of monolignols and other phenolic secondary metabolites. Catalyzes the formation of CoA esters of cinnamate, 4-coumarate, caffeate and ferulate. Is more efficient with substrates in the following order: ferulate &gt; 4-coumarate &gt; caffeate &gt; cinnamate. Possesses very high activity compared to 4CL1, 4CL2, 4CL4 and 4CL5. Cannot convert sinapate to its corresponding CoA ester. May play a role in the synthesis of lignin as well as other phenolic compounds. Follows a two-step reaction mechanism, wherein the carboxylate substrate first undergoes adenylation by ATP, followed by a thioesterification in the presence of CoA to yield the final CoA thioester. In Oryza sativa subsp. japonica (Rice), this protein is 4-coumarate--CoA ligase 3.